The following is a 767-amino-acid chain: Photosystem I P700 chlorophyll a apoprotein A1 (767 aa).

The next 8 helical transmembrane spans lie at 72 to 95 (IFSA…FHGA), 158 to 181 (LMAL…FHYH), 197 to 221 (LNHH…HVSA), 305 to 323 (IAHH…GHMY), 364 to 387 (WHAQ…QHMY), 403 to 429 (IGLF…IAMV), 451 to 473 (AIIS…LYIH), and 548 to 566 (FMVH…LILL). C590 and C599 together coordinate [4Fe-4S] cluster. A run of 2 helical transmembrane segments spans residues 606–627 (HVFL…HFSW) and 681–703 (TSAY…MFLF). H692 contributes to the chlorophyll a' binding site. 2 residues coordinate chlorophyll a: M700 and Y708. Residue W709 coordinates phylloquinone. Residues 741-761 (AVGVAHYLLGGIATTWAFFHA) traverse the membrane as a helical segment.

This sequence belongs to the PsaA/PsaB family. As to quaternary structure, the PsaA/B heterodimer binds the P700 chlorophyll special pair and subsequent electron acceptors. PSI consists of a core antenna complex that captures photons, and an electron transfer chain that converts photonic excitation into a charge separation. The cyanobacterial PSI reaction center is composed of one copy each of PsaA,B,C,D,E,F,I,J,K,L,M and X, and forms trimeric complexes. The cofactor is PSI electron transfer chain: 5 chlorophyll a, 1 chlorophyll a', 2 phylloquinones and 3 4Fe-4S clusters. PSI core antenna: 90 chlorophyll a, 22 carotenoids, 3 phospholipids and 1 galactolipid. P700 is a chlorophyll a/chlorophyll a' dimer, A0 is one or more chlorophyll a, A1 is one or both phylloquinones and FX is a shared 4Fe-4S iron-sulfur center..

It is found in the cellular thylakoid membrane. It carries out the reaction reduced [plastocyanin] + hnu + oxidized [2Fe-2S]-[ferredoxin] = oxidized [plastocyanin] + reduced [2Fe-2S]-[ferredoxin]. In terms of biological role, psaA and PsaB bind P700, the primary electron donor of photosystem I (PSI), as well as the electron acceptors A0, A1 and FX. PSI is a plastocyanin/cytochrome c6-ferredoxin oxidoreductase, converting photonic excitation into a charge separation, which transfers an electron from the donor P700 chlorophyll pair to the spectroscopically characterized acceptors A0, A1, FX, FA and FB in turn. Oxidized P700 is reduced on the lumenal side of the thylakoid membrane by plastocyanin or cytochrome c6. The sequence is that of Photosystem I P700 chlorophyll a apoprotein A1 from Parasynechococcus marenigrum (strain WH8102).